Consider the following 548-residue polypeptide: Phenylalanine--tRNA ligase beta subunit (548 aa).

One can recognise a B5 domain in the interval 271 to 346 (LSEAAAKLDP…ISIGYEALGP (76 aa)). Mg(2+) contacts are provided by Asp-324, Asp-330, Glu-333, and Asp-334.

Belongs to the phenylalanyl-tRNA synthetase beta subunit family. Type 2 subfamily. As to quaternary structure, tetramer of two alpha and two beta subunits. Requires Mg(2+) as cofactor.

It localises to the cytoplasm. The catalysed reaction is tRNA(Phe) + L-phenylalanine + ATP = L-phenylalanyl-tRNA(Phe) + AMP + diphosphate + H(+). The polypeptide is Phenylalanine--tRNA ligase beta subunit (Aeropyrum pernix (strain ATCC 700893 / DSM 11879 / JCM 9820 / NBRC 100138 / K1)).